Here is a 271-residue protein sequence, read N- to C-terminus: uncharacterized protein (271 aa).

This is an uncharacterized protein from Azospirillum brasilense.